The primary structure comprises 204 residues: ATP-dependent Clp protease proteolytic subunit (204 aa).

Residue serine 101 is the Nucleophile of the active site. Residue histidine 126 is part of the active site.

It belongs to the peptidase S14 family. As to quaternary structure, component of the chloroplastic Clp protease core complex.

The protein localises to the plastid. It localises to the chloroplast stroma. The catalysed reaction is Hydrolysis of proteins to small peptides in the presence of ATP and magnesium. alpha-casein is the usual test substrate. In the absence of ATP, only oligopeptides shorter than five residues are hydrolyzed (such as succinyl-Leu-Tyr-|-NHMec, and Leu-Tyr-Leu-|-Tyr-Trp, in which cleavage of the -Tyr-|-Leu- and -Tyr-|-Trp bonds also occurs).. In terms of biological role, cleaves peptides in various proteins in a process that requires ATP hydrolysis. Has a chymotrypsin-like activity. Plays a major role in the degradation of misfolded proteins. The chain is ATP-dependent Clp protease proteolytic subunit from Anthoceros angustus (Hornwort).